The chain runs to 380 residues: Ribosomal RNA large subunit methyltransferase F (380 aa).

2 disordered regions span residues 1-54 (MSHK…PRNA) and 260-279 (SQVM…ATDK). Over residues 21-32 (QRQVVSKSSLQK) the composition is skewed to low complexity. Residues 44 to 53 (QKSKALHPRN) are compositionally biased toward basic residues. A compositionally biased stretch (low complexity) spans 260 to 270 (SQVMSPQVQPS).

Belongs to the methyltransferase superfamily. METTL16/RlmF family.

Its subcellular location is the cytoplasm. The catalysed reaction is adenosine(1618) in 23S rRNA + S-adenosyl-L-methionine = N(6)-methyladenosine(1618) in 23S rRNA + S-adenosyl-L-homocysteine + H(+). Its function is as follows. Specifically methylates the adenine in position 1618 of 23S rRNA. The protein is Ribosomal RNA large subunit methyltransferase F of Shewanella pealeana (strain ATCC 700345 / ANG-SQ1).